The sequence spans 437 residues: MILLWSCLLVAVVGILGTATPQPGNSSLHRLTRQLLQQYHKEVRPVYNWAEATTVYLDLCVHAVLDVDVQNQKLKTSVWYREVWNDEFLSWNSSLFDEIQEISLPLSALWAPDIIINEFVDVERSPDLPYVYVNSSGTIRNHKPIQVVSACSLQTYAFPFDIQNCSLTFNSILHTVEDIDLGFLRNREDIENDKRAFMNDSEWQLLSVSSTYHIRQSSAGDFAQIRFNVVIRRCPLAYVVSLLIPSIFLMLVDLGSFYLPPNCRARIVFKTNVLVGYTVFRVNMSDEVPRSAGCTPLIGVFFTVCMALLVLSLSKSILLIKFLYEERHSGQERPLMCLQGDSDAEESRLYLGAPRADVTESPVHQEHRVPSDTLKDFWFQFRSINNSLRTRDQIHQKEVEWLAILYRFDQLLFRIYLAVLGLYTVTLCSLWALWSRM.

An N-terminal signal peptide occupies residues 1–21 (MILLWSCLLVAVVGILGTATP). Over 22-238 (QPGNSSLHRL…VVIRRCPLAY (217 aa)) the chain is Extracellular. N25, N92, and N134 each carry an N-linked (GlcNAc...) asparagine glycan. C151 and C165 form a disulfide bridge. A helical membrane pass occupies residues 239–259 (VVSLLIPSIFLMLVDLGSFYL). Topologically, residues 260-264 (PPNCR) are cytoplasmic. A helical transmembrane segment spans residues 265-282 (ARIVFKTNVLVGYTVFRV). N283 carries N-linked (GlcNAc...) asparagine glycosylation. Residues 283-292 (NMSDEVPRSA) are Extracellular-facing. A helical transmembrane segment spans residues 293-313 (GCTPLIGVFFTVCMALLVLSL). The Cytoplasmic segment spans residues 314–410 (SKSILLIKFL…WLAILYRFDQ (97 aa)). The interval 377-409 (FWFQFRSINNSLRTRDQIHQKEVEWLAILYRFD) is HA-stretch; determines single-channel conductance in 5-HT3 receptors. Residues 411-431 (LLFRIYLAVLGLYTVTLCSLW) traverse the membrane as a helical segment. The Extracellular segment spans residues 432–437 (ALWSRM).

This sequence belongs to the ligand-gated ion channel (TC 1.A.9) family. 5-hydroxytryptamine receptor (TC 1.A.9.2) subfamily. HTR3B sub-subfamily. Forms homopentameric as well as heteropentameric serotonin-activated cation-selective channel complexes with HTR3A. The homomeric complex is not functional. Heteropentameric complexes display properties which resemble that of neuronal serotonin-activated channels in vivo. Post-translationally, N-glycosylation is required for membrane localization.

The protein resides in the postsynaptic cell membrane. Its subcellular location is the cell membrane. It catalyses the reaction Na(+)(in) = Na(+)(out). It carries out the reaction K(+)(in) = K(+)(out). The enzyme catalyses Ca(2+)(in) = Ca(2+)(out). Its function is as follows. Forms serotonin (5-hydroxytryptamine/5-HT3)-activated cation-selective channel complexes, which when activated cause fast, depolarizing responses in neurons. The polypeptide is 5-hydroxytryptamine receptor 3B (Mus musculus (Mouse)).